Consider the following 576-residue polypeptide: MPALSTGSGSDTGLYELLAALPAQLQPHVDSQEDLTFLWDMFGEKSLHSLVKIHEKLHYYEKQSPVPILHGAAALADDLAEELQNKPLNSEIRELLKLLSKPNVKALLSVHDTVAQKNYDPVLPPMPEDIDDEEDSVKIIRLVKNREPLGATIKKDEQTGAIIVARIMRGGAADRSGLIHVGDELREVNGIPVEDKRPEEIIQILAQSQGAITFKIIPGSKEETPSKEGKMFIKALFDYNPNEDKAIPCKEAGLSFKKGDILQIMSQDDATWWQAKHEADANPRAGLIPSKHFQERRLALRRPEILVQPLKVSNRKSSGFRKSFRLSRKDKKTNKSMYECKKSDQYDTADVPTYEEVTPYRRQTNEKYRLVVLVGPVGVGLNELKRKLLISDTQHYGVTVPHTTRARRSQESDGVEYIFISKHLFETDVQNNKFIEYGEYKNNYYGTSIDSVRSVLAKNKVCLLDVQPHTVKHLRTLEFKPYVIFIKPPSIERLRETRKNAKIISSRDDQGAAKPFTEEDFQEMIKSAQIMESQYGHLFDKIIINDDLTVAFNELKTTFDKLETETHWVPVSWLHS.

L27 domains follow at residues 10–65 and 67–122; these read SDTG…KQSP and PILH…YDPV. Positions 139 to 220 constitute a PDZ domain; sequence IIRLVKNREP…AITFKIIPGS (82 aa). An SH3 domain is found at 228–298; that stretch reads EGKMFIKALF…PSKHFQERRL (71 aa). Residues 289-383 are phospho-regulated basic and hydrophobic (PRBH) motif; sequence PSKHFQERRL…VGPVGVGLNE (95 aa). The Guanylate kinase-like domain occupies 368-560; sequence YRLVVLVGPV…AFNELKTTFD (193 aa). A Phosphoserine modification is found at Ser409.

Belongs to the MAGUK family. Heterodimer; able to heterodimerize via its C-terminal L27 domain with LIN7A, LIN7B and LIN7C. Forms a tripartite complex composed of DLG1, MPP7 and LIN7 (LIN7A or LIN7C). Interacts with DLG1 via its N-terminal L27 domain. Interacts with PALS1 and PATJ. In terms of processing, phosphorylated by aPKC which promotes dissociation from the cell cortex.

The protein localises to the membrane. The protein resides in the lateral cell membrane. It localises to the cell junction. Its subcellular location is the tight junction. It is found in the adherens junction. The protein localises to the cytoplasm. The protein resides in the cell cortex. Functionally, acts as an important adapter that promotes epithelial cell polarity and tight junction formation via its interaction with DLG1. Involved in the assembly of protein complexes at sites of cell-cell contact. This chain is MAGUK p55 subfamily member 7 (MPP7), found in Homo sapiens (Human).